Reading from the N-terminus, the 431-residue chain is D-tagatose-1,6-bisphosphate aldolase subunit KbaZ (431 aa).

This sequence belongs to the GatZ/KbaZ family. KbaZ subfamily. Forms a complex with KbaY.

It functions in the pathway carbohydrate metabolism; D-tagatose 6-phosphate degradation; D-glyceraldehyde 3-phosphate and glycerone phosphate from D-tagatose 6-phosphate: step 2/2. In terms of biological role, component of the tagatose-1,6-bisphosphate aldolase KbaYZ that is required for full activity and stability of the Y subunit. Could have a chaperone-like function for the proper and stable folding of KbaY. When expressed alone, KbaZ does not show any aldolase activity. This is D-tagatose-1,6-bisphosphate aldolase subunit KbaZ from Salmonella arizonae (strain ATCC BAA-731 / CDC346-86 / RSK2980).